Reading from the N-terminus, the 167-residue chain is SsrA-binding protein (167 aa).

The protein belongs to the SmpB family.

It localises to the cytoplasm. In terms of biological role, required for rescue of stalled ribosomes mediated by trans-translation. Binds to transfer-messenger RNA (tmRNA), required for stable association of tmRNA with ribosomes. tmRNA and SmpB together mimic tRNA shape, replacing the anticodon stem-loop with SmpB. tmRNA is encoded by the ssrA gene; the 2 termini fold to resemble tRNA(Ala) and it encodes a 'tag peptide', a short internal open reading frame. During trans-translation Ala-aminoacylated tmRNA acts like a tRNA, entering the A-site of stalled ribosomes, displacing the stalled mRNA. The ribosome then switches to translate the ORF on the tmRNA; the nascent peptide is terminated with the 'tag peptide' encoded by the tmRNA and targeted for degradation. The ribosome is freed to recommence translation, which seems to be the essential function of trans-translation. This chain is SsrA-binding protein, found in Stenotrophomonas maltophilia (strain K279a).